A 487-amino-acid chain; its full sequence is Putative B3 domain-containing protein At1g78640 (487 aa).

2 DNA-binding regions (TF-B3) span residues 171-269 and 379-474; these read RLLL…QQGT and RLTL…LFRV.

It is found in the nucleus. The protein is Putative B3 domain-containing protein At1g78640 of Arabidopsis thaliana (Mouse-ear cress).